Here is a 542-residue protein sequence, read N- to C-terminus: Sensor protein CitS (542 aa).

The Cytoplasmic segment spans residues M1–K13. Residues I14–A34 traverse the membrane as a helical segment. The Extracellular segment spans residues V35–R175. The chain crosses the membrane as a helical span at residues N176 to A196. Residues K197 to G542 lie on the Cytoplasmic side of the membrane. Positions R216 to L279 constitute a PAS domain. A Histidine kinase domain is found at A336–K528. Residue H339 is modified to Phosphohistidine; by autocatalysis.

The protein resides in the cell membrane. It catalyses the reaction ATP + protein L-histidine = ADP + protein N-phospho-L-histidine.. Its function is as follows. Member of the two-component regulatory system CitT/CitS. Regulates the expression of the citM-yflN operon. Functions probably as a membrane-associated protein kinase that phosphorylates CitT in response to environmental citrate or Mg(2+)-citrate complex. The chain is Sensor protein CitS (citS) from Bacillus subtilis (strain 168).